A 127-amino-acid polypeptide reads, in one-letter code: Large ribosomal subunit protein uL24 (127 aa).

Belongs to the universal ribosomal protein uL24 family. As to quaternary structure, component of the large ribosomal subunit. Mature ribosomes consist of a small (40S) and a large (60S) subunit. The 40S subunit contains about 32 different proteins and 1 molecule of RNA (18S). The 60S subunit contains 45 different proteins and 3 molecules of RNA (25S, 5.8S and 5S).

It localises to the cytoplasm. Its function is as follows. Component of the ribosome, a large ribonucleoprotein complex responsible for the synthesis of proteins in the cell. The small ribosomal subunit (SSU) binds messenger RNAs (mRNAs) and translates the encoded message by selecting cognate aminoacyl-transfer RNA (tRNA) molecules. The large subunit (LSU) contains the ribosomal catalytic site termed the peptidyl transferase center (PTC), which catalyzes the formation of peptide bonds, thereby polymerizing the amino acids delivered by tRNAs into a polypeptide chain. The nascent polypeptides leave the ribosome through a tunnel in the LSU and interact with protein factors that function in enzymatic processing, targeting, and the membrane insertion of nascent chains at the exit of the ribosomal tunnel. This is Large ribosomal subunit protein uL24 from Candida albicans (strain SC5314 / ATCC MYA-2876) (Yeast).